Reading from the N-terminus, the 406-residue chain is Phosphorylase b kinase gamma catalytic chain, liver/testis isoform (406 aa).

The region spanning 24–291 is the Protein kinase domain; that stretch reads YDPKDIIGRG…AEQALQHPFF (268 aa). ATP is bound by residues 30–38 and K53; that span reads IGRGVSSVV. The Proton acceptor role is filled by D153. The segment at 306–330 is calmodulin-binding (domain-N); that stretch reads QRFRVAVWTILAAGRVALSSHRLRP. A calmodulin-binding (domain-C) region spans residues 346–370; sequence VRRLIDNCAFRLYGHWVKKGEQQNR.

Belongs to the protein kinase superfamily. CAMK Ser/Thr protein kinase family. As to quaternary structure, hexadecamer of 4 heterotetramers, each composed of alpha, beta, gamma, and delta subunits. Alpha (PHKA1 or PHKA2) and beta (PHKB) are regulatory subunits, gamma (PHKG1 or PHKG2) is the catalytic subunit, and delta is calmodulin.

It carries out the reaction 2 ATP + phosphorylase b = 2 ADP + phosphorylase a.. Catalytic subunit of the phosphorylase b kinase (PHK), which mediates the neural and hormonal regulation of glycogen breakdown (glycogenolysis) by phosphorylating and thereby activating glycogen phosphorylase. May regulate glycogeneolysis in the testis. In vitro, phosphorylates PYGM. The protein is Phosphorylase b kinase gamma catalytic chain, liver/testis isoform (Phkg2) of Rattus norvegicus (Rat).